Consider the following 620-residue polypeptide: Probable potassium transport system protein Kup 1 (620 aa).

Helical transmembrane passes span 7-27 (GIGL…TSPL), 50-70 (VLSL…VIVI), 102-122 (MMLG…TPAI), 136-156 (PDLK…LFAI), 168-188 (FGPV…ANIV), 211-231 (LMSF…EALY), 246-266 (WFGL…ALLI), 284-304 (MVVP…QAVI), 336-356 (IYVP…VVGF), 368-388 (IAVT…AALL), 393-413 (PVVV…FFAA), and 415-435 (IIKV…SFTV).

It belongs to the HAK/KUP transporter (TC 2.A.72) family.

Its subcellular location is the cell inner membrane. The catalysed reaction is K(+)(in) + H(+)(in) = K(+)(out) + H(+)(out). Functionally, transport of potassium into the cell. Likely operates as a K(+):H(+) symporter. This is Probable potassium transport system protein Kup 1 from Rhodopseudomonas palustris (strain ATCC BAA-98 / CGA009).